We begin with the raw amino-acid sequence, 264 residues long: MESGFTSKDTYLSHFNPRDYLEKYYKFGSRHSAESQILKHLLKNLFKIFCLDGVKGDLLIDIGSGPTIYQLLSACESFKEIVVTDYSDQNLQELEKWLKKEPEAFDWSPVVTYVCDLEGNRVKGPEKEEKLRQAVKQVLKCDVTQSQPLGAVPLPPADCVLSTLCLDAACPDLPTYCRALRNLGSLLKPGGFLVIMDALKSSYYMIGEQKFSSLPLGREAVEAAVKEAGYTIEWFEVISQSYSSTMANNEGLFSLVARKLSRPL.

R18 carries the citrulline; alternate modification. Y20 and Y25 together coordinate S-adenosyl-L-methionine. K39 carries the post-translational modification N6-acetyllysine. G63, Y69, D85, and N90 together coordinate S-adenosyl-L-methionine. R132 bears the Citrulline; alternate mark. S-adenosyl-L-methionine is bound by residues 142 to 143 and T163; that span reads DV. R181 bears the Citrulline; alternate mark. Positions 197 and 213 each coordinate nicotinamide.

Belongs to the class I-like SAM-binding methyltransferase superfamily. NNMT/PNMT/TEMT family. Monomer. Post-translationally, deiminated by PADI1 and PADI2. Predominantly expressed in the liver. A lower expression is seen in the kidney, lung, skeletal muscle, placenta and heart. Not detected in the brain or pancreas.

It localises to the cytoplasm. The catalysed reaction is nicotinamide + S-adenosyl-L-methionine = 1-methylnicotinamide + S-adenosyl-L-homocysteine. Its pathway is cofactor metabolism. It participates in amino-acid degradation. With respect to regulation, inactivated by deimination on Arg-132. Functionally, catalyzes the N-methylation of nicotinamide using the universal methyl donor S-adenosyl-L-methionine to form N1-methylnicotinamide and S-adenosyl-L-homocysteine, a predominant nicotinamide/vitamin B3 clearance pathway. Plays a central role in regulating cellular methylation potential, by consuming S-adenosyl-L-methionine and limiting its availability for other methyltransferases. Actively mediates genome-wide epigenetic and transcriptional changes through hypomethylation of repressive chromatin marks, such as H3K27me3. In a developmental context, contributes to low levels of the repressive histone marks that characterize pluripotent embryonic stem cell pre-implantation state. Acts as a metabolic regulator primarily on white adipose tissue energy expenditure as well as hepatic gluconeogenesis and cholesterol biosynthesis. In white adipocytes, regulates polyamine flux by consuming S-adenosyl-L-methionine which provides for propylamine group in polyamine biosynthesis, whereas by consuming nicotinamide controls NAD(+) levels through the salvage pathway. Via its product N1-methylnicotinamide regulates protein acetylation in hepatocytes, by repressing the ubiquitination and increasing the stability of SIRT1 deacetylase. Can also N-methylate other pyridines structurally related to nicotinamide and play a role in xenobiotic detoxification. The protein is Nicotinamide N-methyltransferase of Homo sapiens (Human).